The chain runs to 176 residues: Cytochrome b (176 aa).

3 helical membrane passes run 33 to 53 (FGSL…FLAM), 77 to 98 (WLIR…FLHV), and 113 to 133 (WNIG…GYVL). Heme b-binding residues include His83 and His97.

Belongs to the cytochrome b family. The cytochrome bc1 complex contains 11 subunits: 3 respiratory subunits (MT-CYB, CYC1 and UQCRFS1), 2 core proteins (UQCRC1 and UQCRC2) and 6 low-molecular weight proteins (UQCRH/QCR6, UQCRB/QCR7, UQCRQ/QCR8, UQCR10/QCR9, UQCR11/QCR10 and a cleavage product of UQCRFS1). This cytochrome bc1 complex then forms a dimer. The cofactor is heme b.

The protein localises to the mitochondrion inner membrane. Component of the ubiquinol-cytochrome c reductase complex (complex III or cytochrome b-c1 complex) that is part of the mitochondrial respiratory chain. The b-c1 complex mediates electron transfer from ubiquinol to cytochrome c. Contributes to the generation of a proton gradient across the mitochondrial membrane that is then used for ATP synthesis. The polypeptide is Cytochrome b (MT-CYB) (Sciurus carolinensis (Eastern gray squirrel)).